The following is a 980-amino-acid chain: SLIT and NTRK-like protein 3 (980 aa).

The first 27 residues, 1–27, serve as a signal peptide directing secretion; the sequence is MMKPSIAEMLHRGRMLWIILLSTIALG. The Extracellular segment spans residues 30 to 655; the sequence is TPIPLIEDSE…SPPGGPVPLS (626 aa). An N-linked (GlcNAc...) asparagine glycan is attached at Asn-69. 6 LRR repeats span residues 79 to 100, 103 to 124, 127 to 148, 151 to 172, 175 to 196, and 198 to 219; these read RPFK…SFLH, NAVS…AFNG, ILKR…TFLG, SLEY…AFRN, KLRV…LFKA, and SLTH…GMLD. One can recognise an LRRCT 1 domain in the interval 233–284; the sequence is NPWNCTCEIVQLKSWLERIPYTALVGDITCETPFHFHGKDLREIKKTELCPL. The interval 326–361 is disordered; it reads EYKSSNKQPKPTKQPRTPRPPSTSQALYPGPNQPPI. An LRRNT domain is found at 365–407; the sequence is QTRPPIPIICPTGCTCNLHINDLGLTVNCKERGFNNISELLPR. 6 LRR repeats span residues 410 to 431, 434 to 455, 458 to 479, 482 to 503, 506 to 527, and 529 to 550; these read NAKK…DFWN, SLDL…AFIN, NLKS…MFRG, SLHY…AFSL, NLKL…AFAG, and SLAR…GVLE. In terms of domain architecture, LRRCT 2 spans 563–614; the sequence is NPWDCTCDLVPFKQWIETISSVSVVGDVLCRTPENLTHRDVRTIELEVLCPE. N-linked (GlcNAc...) asparagine glycosylation occurs at Asn-597. Residues 622 to 644 form a disordered region; that stretch reads GPSPPQPGDYHPNGGPTSASPYE. The chain crosses the membrane as a helical span at residues 656–676; that stretch reads VLILSLLVLFFSAVFVAAGLF. Over 677–980 the chain is Cytoplasmic; it reads AYVLRRRRKK…EVLEKTAYRF (304 aa). Disordered regions lie at residues 709 to 735 and 762 to 785; these read LFED…EKAP and EEEV…GTQP. A compositionally biased stretch (gly residues) spans 715–725; sequence GNSGGSGGGGR.

Belongs to the SLITRK family. In terms of tissue distribution, broadly expressed in embryonic brain with highest expression in cortical plate, pyramidal cell layer of the hippocampus, thalamus and hypothalamus.

Its subcellular location is the membrane. Suppresses neurite outgrowth. This chain is SLIT and NTRK-like protein 3 (Slitrk3), found in Mus musculus (Mouse).